The following is an 84-amino-acid chain: Acyl carrier protein (84 aa).

In terms of domain architecture, Carrier spans 1 to 75 (MIFQKIQEFI…DILEYIQQHV (75 aa)). An O-(pantetheine 4'-phosphoryl)serine modification is found at serine 35.

The protein belongs to the acyl carrier protein (ACP) family. Post-translationally, 4'-phosphopantetheine is transferred from CoA to a specific serine of apo-ACP by AcpS. This modification is essential for activity because fatty acids are bound in thioester linkage to the sulfhydryl of the prosthetic group.

The protein resides in the cytoplasm. It participates in lipid metabolism; fatty acid biosynthesis. In terms of biological role, carrier of the growing fatty acid chain in fatty acid biosynthesis. The sequence is that of Acyl carrier protein from Phytoplasma mali (strain AT).